A 577-amino-acid polypeptide reads, in one-letter code: Monooxygenase PC-14 (577 aa).

Belongs to the FMO family. FAD serves as cofactor.

It participates in secondary metabolite biosynthesis. In terms of biological role, monooxygenase; part of the gene cluster that mediates the biosynthesis of the indole diterpenes penitrems. The geranylgeranyl diphosphate (GGPP) synthase penG catalyzes the first step in penitrem biosynthesis via conversion of farnesyl pyrophosphate and isopentyl pyrophosphate into geranylgeranyl pyrophosphate (GGPP). Condensation of indole-3-glycerol phosphate with GGPP by the prenyl transferase penC then forms 3-geranylgeranylindole (3-GGI). Epoxidation by the FAD-dependent monooxygenase penM leads to a epoxidized-GGI that is substrate of the terpene cyclase penB for cyclization to yield paspaline. Paspaline is subsequently converted to 13-desoxypaxilline by the cytochrome P450 monooxygenase penP, the latter being then converted to paxilline by the cytochrome P450 monooxygenase penQ. Paxilline is converted to beta-paxitriol via C-10 ketoreduction by the short-chain dehydrogenase PC-15 which can be monoprenylated at the C-20 by the indole diterpene prenyltransferase penD. A two-step elimination (acetylation and elimination) process performed by the O-acetyltransferase PC-16 and the P.simplicissimum ptmI-ortholog not yet identified in P.crustosum, leads to the production of the prenylated form of penijanthine. The FAD-linked oxidoreductase ptmO then converts the prenylated form of penijanthine into PC-M5 which is in turn transformed into PC-M4 by the aromatic dimethylallyltransferase PC-22. A series of oxidation steps involving 4 cytochrome P450 monooxygenases (PC-21, PC-05, PC-23, PC-20) and a FAD-dependent monooxygenase (PC-14) are required for the transformation of PC-M4 to penitrems A and E. Synthesis of these final products is proposed to proceed via penitrems D and C (PC-21, PC-05, PC-14) and penitrems B and F (PC-21, PC-05, PC-14, PC-23). In Penicillium crustosum (Blue mold fungus), this protein is Monooxygenase PC-14.